The following is a 162-amino-acid chain: NADH-quinone oxidoreductase subunit I (162 aa).

4Fe-4S ferredoxin-type domains lie at 54-83 and 93-122; these read RRYE…IESE and TRYD…ETQI. The [4Fe-4S] cluster site is built by Cys63, Cys66, Cys69, Cys73, Cys102, Cys105, Cys108, and Cys112.

It belongs to the complex I 23 kDa subunit family. NDH-1 is composed of 14 different subunits. Subunits NuoA, H, J, K, L, M, N constitute the membrane sector of the complex. Requires [4Fe-4S] cluster as cofactor.

The protein resides in the cell inner membrane. It catalyses the reaction a quinone + NADH + 5 H(+)(in) = a quinol + NAD(+) + 4 H(+)(out). In terms of biological role, NDH-1 shuttles electrons from NADH, via FMN and iron-sulfur (Fe-S) centers, to quinones in the respiratory chain. The immediate electron acceptor for the enzyme in this species is believed to be ubiquinone. Couples the redox reaction to proton translocation (for every two electrons transferred, four hydrogen ions are translocated across the cytoplasmic membrane), and thus conserves the redox energy in a proton gradient. In Burkholderia mallei (strain NCTC 10247), this protein is NADH-quinone oxidoreductase subunit I.